Reading from the N-terminus, the 81-residue chain is Cytoplasmic envelopment protein 3 (81 aa).

Gly2 is lipidated: N-myristoyl glycine; by host. Positions 22–23 (LV) match the Di-leucine-like internalization motif motif. An asp/Glu-rich (acidic) region spans residues 41–47 (DFDENVT). Positions 47 to 81 (TEDADKSTQRRPRVIDVTPKRKPSGKSSHSKCAKC) are disordered. A compositionally biased stretch (basic residues) spans 66-81 (KRKPSGKSSHSKCAKC).

The protein belongs to the herpesviridae cytoplasmic envelopment protein 3 family. As to quaternary structure, interacts with cytoplasmic envelopment protein 2; this interaction is essential for the proper localization of each protein to the assembly complex and thus for the production of infectious virus. Post-translationally, myristoylation and palmitoylation (probably on one or more of the nearby cysteines at the N-terminus) enable membrane-binding and Golgi apparatus-specific targeting and are essential for efficient packaging. In terms of processing, phosphorylated. Phosphorylation does not seem to be required for recycling to the host Golgi apparatus. Packaging is selective for underphosphorylated forms.

It is found in the virion tegument. Its subcellular location is the virion membrane. The protein resides in the host cell membrane. It localises to the host Golgi apparatus membrane. Its function is as follows. Plays an important role in the cytoplasmic envelopment of tegument proteins and capsids during the assembly and egress processes. Also participates in viral entry at the fusion step probably by regulating the core fusion machinery. This chain is Cytoplasmic envelopment protein 3, found in Homo sapiens (Human).